A 1187-amino-acid chain; its full sequence is MPFGLKLRRTRRYNVLSKNCFVTRIRLLDSNVIECTLSVESTGQECLEAVAQRLELRETHYFGLWFLSKSQQARWVELEKPLKKHLDKFANEPLLFFGVMFYVPNVSWLQQEATRYQYYLQVKKDVLEGRLRCTLDQVIRLAGLAVQADFGDYNQFDSQDFLREYVLFPMDLALEEAVLEELTQKVAQEHKAHSGILPAEAELMYINEVERLDGFGQEIFPVKDNHGNCVHLGIFFMGIFVRNRIGRQAVIYRWNDMGNITHNKSTILVELINKEETALFHTDDIENAKYISRLFATRHKFYKQNKICTEQSNSPPPIRRQPTWSRSSLPRQQPYILPPVHVQCGEHYSETHTSQDSIFHGNEEALYCNSHNSLDLNYLNGTVTNGSVCSVHSVNSLNCSQSFIQASPVSSNLSIPGSDIMRADYIPSHRHSAIIVPSYRPTPDYETVMRQMKRGILHTDSQSQSLRNLNIINTHAYNQPEDLVYSQPEMRERHPYTVPYGPQGVYSNKLVSPSDQRNPKNNVVPSKPGASAISHTVSTPELANMQLQGSHNYSTAHMLKNYLFRPPPPYPRPRPATSTPDLASHRHKYVSGSSPDLVTRKVQLSVKTFQEDSSPVVHQSLQEVSEPLTATKHHGTVNKRHSLEVMNSMVRGMEAMTLKSLHLPMARRNTLREQGPPEEGSGSHEVPQLPQYHHKKTFSDATMLIHSSESEEEEEEAPESVPQIPMLREKMEYSAQLQAALARIPNKPPPEYPGPRKSVSNGALRQDQASLPPAMARARVLRHGPAKAISMSRTDPPAVNGASLGPSISEPDLTSVKERVKKEPVKERPVSEMFSLEDSIIEREMMIRNLEKQKMAGLEAQKRPLMLAALNGLSVARVSGREENRVDATRVPMDERFRTLKKKLEEGMVFTEYEQIPKKKANGIFSTAALPENAERSRIREVVPYEENRVELIPTKENNTGYINASHIKVVVGGAEWHYIATQGPLPHTCHDFWQMVWEQGVNVIAMVTAEEEGGRTKSHRYWPKLGSKHSSATYGKFKVTTKFRTDSVCYATTGLKVKHLLSGQERTVWHLQYTDWPDHGCPEDVQGFLSYLEEIQSVRRHTNSMLEGTKNRHPPIVVHCSAGVGRTGVLILSELMIYCLEHNEKVEVPMMLRLLREQRMFMIQTIAQYKFVYQVLIQFLQNSRLI.

The FERM domain maps to 21-306 (FVTRIRLLDS…TRHKFYKQNK (286 aa)). 3 positions are modified to phosphoserine: Ser-314, Ser-461, and Ser-486. Over residues 510–524 (LVSPSDQRNPKNNVV) the composition is skewed to polar residues. Residues 510-531 (LVSPSDQRNPKNNVVPSKPGAS) form a disordered region. Ser-591, Ser-593, Ser-594, and Ser-642 each carry phosphoserine. 2 disordered regions span residues 671-690 (LREQ…PQLP) and 787-824 (KAIS…KKEP). Basic and acidic residues predominate over residues 815 to 824 (SVKERVKKEP). Position 831 is a phosphoserine (Ser-831). One can recognise a Tyrosine-protein phosphatase domain in the interval 909-1180 (VFTEYEQIPK…KFVYQVLIQF (272 aa)). Residues Asp-1079, 1121 to 1127 (CSAGVGR), and Gln-1165 contribute to the substrate site. Cys-1121 serves as the catalytic Phosphocysteine intermediate.

Belongs to the protein-tyrosine phosphatase family. Non-receptor class subfamily. Interacts with FLT4; the interaction is enhanced by stimulation with VEGFC. Interacts (via PPxY motifs) with YAP1 (via WW domains); this interaction leads to the cytoplasmic sequestration of YAP1 and inhibits its transcriptional co-activator activity. Post-translationally, ubiquitinated by the ECS (Elongin BC-CUL2/5-SOCS-box protein)/LRR1 E3 ligase complex and subsequently targeted to proteasomal degradation. Ubiquitous.

It is found in the cytoplasm. Its subcellular location is the cytoskeleton. The protein localises to the nucleus. The enzyme catalyses O-phospho-L-tyrosyl-[protein] + H2O = L-tyrosyl-[protein] + phosphate. Its function is as follows. Protein tyrosine phosphatase which may play a role in the regulation of lymphangiogenesis, cell-cell adhesion, cell-matrix adhesion, cell migration, cell growth and also regulates TGF-beta gene expression, thereby modulating epithelial-mesenchymal transition. Mediates beta-catenin dephosphorylation at adhesion junctions. Acts as a negative regulator of the oncogenic property of YAP, a downstream target of the hippo pathway, in a cell density-dependent manner. May function as a tumor suppressor. The protein is Tyrosine-protein phosphatase non-receptor type 14 (PTPN14) of Homo sapiens (Human).